A 177-amino-acid polypeptide reads, in one-letter code: Large ribosomal subunit protein uL6 (177 aa).

It belongs to the universal ribosomal protein uL6 family. Part of the 50S ribosomal subunit.

Its function is as follows. This protein binds to the 23S rRNA, and is important in its secondary structure. It is located near the subunit interface in the base of the L7/L12 stalk, and near the tRNA binding site of the peptidyltransferase center. This is Large ribosomal subunit protein uL6 from Pectobacterium atrosepticum (strain SCRI 1043 / ATCC BAA-672) (Erwinia carotovora subsp. atroseptica).